A 44-amino-acid polypeptide reads, in one-letter code: Large ribosomal subunit protein bL34 (44 aa).

The segment at 1-26 (MQRTLGGTNRKRKRTSGFRARMRTPD) is disordered. The span at 9–22 (NRKRKRTSGFRARM) shows a compositional bias: basic residues.

It belongs to the bacterial ribosomal protein bL34 family.

This Trichormus variabilis (strain ATCC 29413 / PCC 7937) (Anabaena variabilis) protein is Large ribosomal subunit protein bL34.